We begin with the raw amino-acid sequence, 642 residues long: Threonine--tRNA ligase (642 aa).

In terms of domain architecture, TGS spans 1–61 (MPVITLPDGS…ETDSTLSIIT (61 aa)). Positions 243–534 (DHRKIGKQLD…LTEEFAGFFP (292 aa)) are catalytic. Positions 334, 385, and 511 each coordinate Zn(2+).

This sequence belongs to the class-II aminoacyl-tRNA synthetase family. Homodimer. It depends on Zn(2+) as a cofactor.

The protein resides in the cytoplasm. The catalysed reaction is tRNA(Thr) + L-threonine + ATP = L-threonyl-tRNA(Thr) + AMP + diphosphate + H(+). Its function is as follows. Catalyzes the attachment of threonine to tRNA(Thr) in a two-step reaction: L-threonine is first activated by ATP to form Thr-AMP and then transferred to the acceptor end of tRNA(Thr). Also edits incorrectly charged L-seryl-tRNA(Thr). The sequence is that of Threonine--tRNA ligase from Klebsiella pneumoniae (strain 342).